We begin with the raw amino-acid sequence, 140 residues long: Nucleoside diphosphate kinase (140 aa).

The ATP site is built by K11, F59, R87, T93, R104, and N114. Catalysis depends on H117, which acts as the Pros-phosphohistidine intermediate.

Belongs to the NDK family. As to quaternary structure, homotetramer. Mg(2+) serves as cofactor.

The protein localises to the cytoplasm. It catalyses the reaction a 2'-deoxyribonucleoside 5'-diphosphate + ATP = a 2'-deoxyribonucleoside 5'-triphosphate + ADP. The catalysed reaction is a ribonucleoside 5'-diphosphate + ATP = a ribonucleoside 5'-triphosphate + ADP. Major role in the synthesis of nucleoside triphosphates other than ATP. The ATP gamma phosphate is transferred to the NDP beta phosphate via a ping-pong mechanism, using a phosphorylated active-site intermediate. This chain is Nucleoside diphosphate kinase, found in Rhizobium etli (strain ATCC 51251 / DSM 11541 / JCM 21823 / NBRC 15573 / CFN 42).